Consider the following 869-residue polypeptide: Probable inorganic carbon transporter subunit DabA (869 aa).

A disordered region spans residues methionine 1–arginine 32. Over residues glutamine 8–arginine 17 the composition is skewed to basic and acidic residues. Cysteine 376, aspartate 378, histidine 555, and cysteine 570 together coordinate Zn(2+).

Belongs to the inorganic carbon transporter (TC 9.A.2) DabA family. In terms of assembly, forms a complex with DabB. It depends on Zn(2+) as a cofactor.

The protein resides in the cell inner membrane. Part of an energy-coupled inorganic carbon pump. The chain is Probable inorganic carbon transporter subunit DabA from Burkholderia multivorans (strain ATCC 17616 / 249).